A 368-amino-acid polypeptide reads, in one-letter code: Decarboxylase yanB (368 aa).

Zn(2+) contacts are provided by H7, H9, and H159. N-linked (GlcNAc...) asparagine glycosylation is present at N169. D283 is a Zn(2+) binding site. Residues 339–359 traverse the membrane as a helical segment; the sequence is WGAFSACLLLPVGLSALYSVL.

It belongs to the metallo-dependent hydrolases superfamily. ACMSD family.

The protein localises to the membrane. The enzyme catalyses 6-methylsalicylate + H(+) = 3-methylphenol + CO2. It functions in the pathway secondary metabolite biosynthesis; terpenoid biosynthesis. In terms of biological role, decarboxylase; part of the gene cluster that mediates the biosynthesis of yanuthone D, a fungal isoprenoid epoxycyclohexenone that acts as an antibiotic against fungi and bacteria. The first step of the pathway is the synthesis of 6-methylsalicylic acid (6-MSA) by the polyketide synthase yanA. 6-MSA is then converted to m-cresol by the decarboxylase yanB. The cytochrome P450 monooxygenase yanC then catalyzes the oxidation of m-cresol to toluquinol. Epoxidation of toluquinol is then performed by the short chain dehydrogenase yanD, with the help of yanE, and a further prenylation by yanG leads to 7-deacetoxyyanuthone A. The next step is the hydroxylation of C-22 of 7-deacetoxyyanuthone A by the cytochrome P450 monooxygenase yanH to yield 22-deacetylyanuthone A. O-Mevalon transferase yanI then attaches mevalon to the hydroxyl group of 22-deacetylyanuthone A to produce yanuthone E. Finally, the FAD-dependent monooxygenase yanF oxidizes the hydroxyl group at C15 of yanuthone E to form yanuthone D. Furthermore, several branching points in the pathway lead to the production of yanuthones F and G from 7-deacetoxyyanuthone A; yanuthones H and I from 22-deacetylyanuthone A; and yanuthone J from yanuthone E. The polypeptide is Decarboxylase yanB (Aspergillus niger (strain ATCC 1015 / CBS 113.46 / FGSC A1144 / LSHB Ac4 / NCTC 3858a / NRRL 328 / USDA 3528.7)).